The sequence spans 1045 residues: Tyrosine-protein kinase-like otk (1045 aa).

Positions 1–25 are cleaved as a signal peptide; the sequence is MPIVMDMNMLLMLSLAFTVMAPASA. Ig-like C2-type domains follow at residues 26–116, 115–200, 260–373, 376–469, and 474–564; these read SSSR…AKLS, LSVI…RVMS, PEGL…APVN, PGAL…VAIN, and PRFS…VRLL. Residues 26–587 lie on the Extracellular side of the membrane; sequence SSSRFTQPPQ…AGDGFLVTRA (562 aa). 4 cysteine pairs are disulfide-bonded: Cys-49–Cys-97, Cys-139–Cys-189, Cys-285–Cys-362, and Cys-406–Cys-453. N-linked (GlcNAc...) asparagine glycans are attached at residues Asn-344, Asn-424, Asn-435, Asn-442, Asn-450, Asn-463, Asn-518, and Asn-530. Cys-496 and Cys-548 are oxidised to a cystine. The chain crosses the membrane as a helical span at residues 588–608; sequence VLITMTVALAYIVLVVGLMLW. Residues 609–1045 lie on the Cytoplasmic side of the membrane; it reads CRYRRQARKA…LSKAMQAAEK (437 aa). Residues 628–676 are disordered; it reads AGGDQAESGKNTEQEPCLSKQRNGHGKSRTAANGDAQKSDDTACSQQSK. Ser-681 is subject to Phosphoserine. The 346-residue stretch at 695-1040 folds into the Protein kinase; inactive domain; that stretch reads LSELIQIGRG…QLGAALSKAM (346 aa). The tract at residues 722-790 is disordered; it reads ASPSDKDADT…QPQEQAQSES (69 aa). Positions 725–736 are enriched in basic and acidic residues; the sequence is SDKDADTEKQHS. Gly residues predominate over residues 743 to 752; that stretch reads GASGASGCGS. A compositionally biased stretch (acidic residues) spans 771 to 782; that stretch reads DDIEEIKEEEQP.

It belongs to the protein kinase superfamily. Tyr protein kinase family. Insulin receptor subfamily. In terms of assembly, interacts with plexA; component of a receptor complex that mediates the repulsive signaling in response to Semaphorin ligands.

The protein resides in the cell membrane. Its function is as follows. Acts as a calcium-dependent, homophilic cell adhesion molecule that regulates neural recognition during the development of the nervous system. Component of the repulsive Plexin signaling response to regulate motor axon guidance at the embryonic stage. Also component of a receptor complex that is required in the adult visual system to innervate the lamina layer; specific targeting of R1-R6 axons. In Drosophila mojavensis (Fruit fly), this protein is Tyrosine-protein kinase-like otk.